The sequence spans 840 residues: DNA mismatch repair protein MutS (840 aa).

An ATP-binding site is contributed by glycine 601–serine 608.

Belongs to the DNA mismatch repair MutS family.

This protein is involved in the repair of mismatches in DNA. It is possible that it carries out the mismatch recognition step. This protein has a weak ATPase activity. This is DNA mismatch repair protein MutS from Lactococcus lactis subsp. cremoris (strain SK11).